The following is a 404-amino-acid chain: Phosphoribulokinase, chloroplastic (404 aa).

The N-terminal 53 residues, 1 to 53 (MAFCSPHTTTSLRSPCTTIPNSGFRQNQVIFFTTRSSRRSNTRHGARTFQVSC), are a transit peptide targeting the chloroplast. Cys69 and Cys108 form a disulfide bridge.

The protein belongs to the phosphoribulokinase family.

It localises to the plastid. The protein resides in the chloroplast. It catalyses the reaction D-ribulose 5-phosphate + ATP = D-ribulose 1,5-bisphosphate + ADP + H(+). It functions in the pathway carbohydrate biosynthesis; Calvin cycle. Its activity is regulated as follows. Light regulated via thioredoxin by reversible oxidation/reduction of sulfhydryl/disulfide groups. This chain is Phosphoribulokinase, chloroplastic, found in Triticum aestivum (Wheat).